Reading from the N-terminus, the 2801-residue chain is Neurobeachin-like protein 2 (2801 aa).

The interval 1379-1529 (RHEEEYEEEE…TISNTSNPQA (151 aa)) is disordered. Residues 1383–1393 (EYEEEEGETQD) show a composition bias toward acidic residues. 4 stretches are compositionally biased toward polar residues: residues 1400–1413 (DLSQ…QLKN), 1424–1437 (GDQS…SNTV), 1470–1481 (KGPQTPVGSQPE), and 1500–1528 (SSSL…SNPQ). Residues 1986-2086 (SQKEKLVLSE…VRNKVYSRIL (101 aa)) enclose the BEACH-type PH domain. Positions 2099 to 2391 (RSPQELLKAS…QLLKEPHPPR (293 aa)) constitute a BEACH domain. WD repeat units lie at residues 2431-2468 (LVQA…SWLP), 2492-2535 (RFLS…MLGK), 2538-2575 (LVGR…VWQV), 2588-2626 (RPIQ…VHSV), 2633-2676 (WTLR…RYAL), 2684-2719 (TLLA…IRDL), and 2727-2762 (APLA…VGAG).

The protein belongs to the WD repeat neurobeachin family.

It is found in the endoplasmic reticulum. Involved in thrombopoiesis. Plays a role in the development or secretion of alpha-granules, that contain several growth factors important for platelet biogenesis. This is Neurobeachin-like protein 2 (nbeal2) from Danio rerio (Zebrafish).